Reading from the N-terminus, the 352-residue chain is C-C chemokine receptor type 5 (352 aa).

Residues 1 to 30 (MDYQVSSPTYDIDYYTSEPCQKINVKQIAA) are Extracellular-facing. Tyr-3 carries the post-translational modification Sulfotyrosine. 2 O-linked (GalNAc...) serine glycosylation sites follow: Ser-6 and Ser-7. Tyr-10, Tyr-14, and Tyr-15 each carry sulfotyrosine. 2 disulfide bridges follow: Cys-20/Cys-269 and Cys-101/Cys-178. A helical transmembrane segment spans residues 31–58 (RLLPPLYSLVFIFGFVGNILVVLILINC). The Cytoplasmic portion of the chain corresponds to 59–68 (KRLKSMTDIY). The chain crosses the membrane as a helical span at residues 69–89 (LLNLAISDLLFLLTVPFWAHY). Residues 90–102 (AAAQWDFGNTMCQ) lie on the Extracellular side of the membrane. Residues 103-124 (LLTGLYFIGFFSGIFFIILLTI) traverse the membrane as a helical segment. At 125–141 (DRYLAIVHAVFALKART) the chain is on the cytoplasmic side. Residues 142-166 (VTFGVVTSVITWVVAVFASLPRIIF) traverse the membrane as a helical segment. Topologically, residues 167–198 (TRSQREGLHYTCSSHFPYSQYQFWKNFQTLKI) are extracellular. Residues 199-218 (VILGLVLPLLVMVICYSGIL) traverse the membrane as a helical segment. At 219–235 (KTLLRCRNEKKRHRAVR) the chain is on the cytoplasmic side. Residues 236-260 (LIFTIMIVYFLFWAPYNIVLLLNTF) traverse the membrane as a helical segment. The Extracellular segment spans residues 261 to 277 (QEFFGLNNCSSSNRLDQ). Residues 278-301 (AMQVTETLGMTHCCINPIIYAFVG) form a helical membrane-spanning segment. The Cytoplasmic segment spans residues 302-352 (EKFRNYLLVFFQKHIAKRFCKCCSIFQQEAPERASSVYTRSTGEQETSVGL). 3 S-palmitoyl cysteine lipidation sites follow: Cys-321, Cys-323, and Cys-324. 4 positions are modified to phosphoserine; by BARK1: Ser-336, Ser-337, Ser-342, and Ser-349.

This sequence belongs to the G-protein coupled receptor 1 family. Interacts with PRAF2. Efficient ligand binding to CCL3/MIP-1alpha and CCL4/MIP-1beta requires sulfation, O-glycosylation and sialic acid modifications. Glycosylation on Ser-6 is required for efficient binding of CCL4. Interacts with GRK2. Interacts with ARRB1 and ARRB2. Interacts with CNIH4. Interacts with S100A4; this interaction stimulates T-lymphocyte chemotaxis. Sulfated on at least 2 of the N-terminal tyrosines. Sulfation is required for efficient binding of the chemokines, CCL3 and CCL4. Post-translationally, palmitoylation in the C-terminal is important for cell surface expression. In terms of processing, phosphorylation on serine residues in the C-terminal is stimulated by binding CC chemokines especially by APO-RANTES. O-glycosylated, but not N-glycosylated. Ser-6 appears to be the major site even if Ser-7 may be also O-glycosylated. Also sialylated glycans present which contribute to chemokine binding. Thr-16 and Ser-17 may also be glycosylated and, if so, with small moieties such as a T-antigen.

It localises to the cell membrane. Functionally, receptor for a number of inflammatory CC-chemokines including CCL3/MIP-1-alpha, CCL4/MIP-1-beta and RANTES and subsequently transduces a signal by increasing the intracellular calcium ion level. May play a role in the control of granulocytic lineage proliferation or differentiation. Participates in T-lymphocyte migration to the infection site by acting as a chemotactic receptor. This is C-C chemokine receptor type 5 (CCR5) from Chlorocebus tantalus (Tantalus monkey).